Here is a 1000-residue protein sequence, read N- to C-terminus: Kinesin-like protein CIN8 (1000 aa).

A compositionally biased stretch (polar residues) spans 1 to 26; that stretch reads MPAENQNTGQDRSSNSISKNGNSQVG. The segment at 1-28 is disordered; the sequence is MPAENQNTGQDRSSNSISKNGNSQVGCH. The 442-residue stretch at 36-477 folds into the Kinesin motor domain; it reads NITVAVRCRG…LEYASKAKNI (442 aa). 128–135 contributes to the ATP binding site; it reads GMTSTGKT. Positions 220-242 are enriched in low complexity; the sequence is ANNTTSNSASSSRSNSRNSSPRS. 2 disordered regions span residues 220–248 and 260–312; these read ANNT…DLTP and KSLP…PNDQ. Polar residues predominate over residues 261 to 276; that stretch reads SLPNTIKQQYQQQQAV. Residues 277–301 show a composition bias toward low complexity; it reads NSRNNSSSNSGSTTNNASSNTNTNN. Residues 302-312 are compositionally biased toward polar residues; it reads GQRSSMAPNDQ. 2 coiled-coil regions span residues 518–615 and 860–904; these read MSQD…MALH and ISVM…IKNS. Residues 970 to 1000 form a disordered region; it reads VISPKKHAIEDENKSSENVDNEGSRKMLKIE. Serine 972 bears the Phosphoserine mark. Residues 976–1000 show a composition bias toward basic and acidic residues; it reads HAIEDENKSSENVDNEGSRKMLKIE.

It belongs to the TRAFAC class myosin-kinesin ATPase superfamily. Kinesin family. BimC subfamily.

It localises to the cytoplasm. The protein localises to the cytoskeleton. It is found in the spindle. The protein resides in the mitochondrion. Elongates the mitotic spindle by interacting with spindle microtubules to generate an outward force pushing spindle poles apart. Following spindle assembly, CIN8 and KIP1 apparently act to oppose a force, possibly generated by KAR3, that draws separated poles back together. This Saccharomyces cerevisiae (strain ATCC 204508 / S288c) (Baker's yeast) protein is Kinesin-like protein CIN8 (CIN8).